The following is a 378-amino-acid chain: Glutamate 5-kinase (378 aa).

Lysine 19 contacts ATP. Residues serine 60, aspartate 147, and asparagine 159 each coordinate substrate. Residues 179-180 (SD) and 221-227 (SGGMRTK) each bind ATP. The PUA domain maps to 285–362 (KGTLTIDAGA…GEMEQLLGYR (78 aa)).

Belongs to the glutamate 5-kinase family.

Its subcellular location is the cytoplasm. It carries out the reaction L-glutamate + ATP = L-glutamyl 5-phosphate + ADP. It participates in amino-acid biosynthesis; L-proline biosynthesis; L-glutamate 5-semialdehyde from L-glutamate: step 1/2. Catalyzes the transfer of a phosphate group to glutamate to form L-glutamate 5-phosphate. The protein is Glutamate 5-kinase of Gluconobacter oxydans (strain 621H) (Gluconobacter suboxydans).